A 70-amino-acid polypeptide reads, in one-letter code: U2-agatoxin-Ao1q (70 aa).

The signal sequence occupies residues 1-20; sequence MRSIISLLLISAMVFSMIAA. Positions 21–34 are excised as a propeptide; sequence VPEEEGLQLSEDER. 2 cysteine pairs are disulfide-bonded: Cys-44–Cys-58 and Cys-52–Cys-68. Leu-69 carries the post-translational modification Leucine amide.

It belongs to the neurotoxin 01 (U2-agtx) family. Does not contain a cysteine at position 53 which disrupts the cysteine framework. As to expression, expressed by the venom gland.

Its subcellular location is the secreted. Its function is as follows. Insect active toxin causing rapid but reversible paralysis in crickets. No activity shown in mammals. Does not show effect on mammalian voltage-gated calcium channels. The sequence is that of U2-agatoxin-Ao1q from Agelena orientalis (Funnel-web spider).